The sequence spans 238 residues: Enoyl-CoA delta isomerase 3 (238 aa).

The protein belongs to the enoyl-CoA hydratase/isomerase family.

It localises to the cytoplasm. The protein localises to the nucleus. The catalysed reaction is a (3Z)-enoyl-CoA = a 4-saturated (2E)-enoyl-CoA. It catalyses the reaction a (3E)-enoyl-CoA = a 4-saturated (2E)-enoyl-CoA. It participates in lipid metabolism; fatty acid beta-oxidation. In terms of biological role, able to isomerize both 3-cis and 3-trans double bonds into the 2-trans form in a range of enoyl-CoA species. Essential for the beta oxidation of unsaturated fatty acids. In Arabidopsis thaliana (Mouse-ear cress), this protein is Enoyl-CoA delta isomerase 3.